The sequence spans 137 residues: Phosphoribosyl-AMP cyclohydrolase (137 aa).

Aspartate 84 contributes to the Mg(2+) binding site. Residue cysteine 85 coordinates Zn(2+). Residues aspartate 86 and aspartate 88 each coordinate Mg(2+). Zn(2+) contacts are provided by cysteine 101 and cysteine 108.

Belongs to the PRA-CH family. As to quaternary structure, homodimer. Mg(2+) serves as cofactor. Zn(2+) is required as a cofactor.

The protein localises to the cytoplasm. The catalysed reaction is 1-(5-phospho-beta-D-ribosyl)-5'-AMP + H2O = 1-(5-phospho-beta-D-ribosyl)-5-[(5-phospho-beta-D-ribosylamino)methylideneamino]imidazole-4-carboxamide. The protein operates within amino-acid biosynthesis; L-histidine biosynthesis; L-histidine from 5-phospho-alpha-D-ribose 1-diphosphate: step 3/9. Functionally, catalyzes the hydrolysis of the adenine ring of phosphoribosyl-AMP. This is Phosphoribosyl-AMP cyclohydrolase from Pelodictyon phaeoclathratiforme (strain DSM 5477 / BU-1).